The chain runs to 348 residues: Rhodopsin (348 aa).

N-acetylmethionine is present on methionine 1. The Extracellular segment spans residues 1–36; the sequence is MNGTEGPNFYVPFSNKTGVVRSPFEAPQYYLAEPWQ. N-linked (GlcNAc...) asparagine glycans are attached at residues asparagine 2 and asparagine 15. The helical transmembrane segment at 37 to 61 threads the bilayer; it reads FSMLAAYMFLLIVLGFPINFLTLYV. The Cytoplasmic portion of the chain corresponds to 62–73; that stretch reads TVQHKKLRTPLN. Residues 74–96 form a helical membrane-spanning segment; the sequence is YILLNLAVADLFMVFGGFTTTLY. The Extracellular portion of the chain corresponds to 97–110; sequence TSLHGYFVFGPTGC. A disulfide bond links cysteine 110 and cysteine 187. Residues 111-133 traverse the membrane as a helical segment; it reads NLEGFFATLGGEIALWSLVVLAI. The 'Ionic lock' involved in activated form stabilization motif lies at 134-136; it reads ERY. Residues 134-152 lie on the Cytoplasmic side of the membrane; sequence ERYVVVCKPMSNFRFGENH. The chain crosses the membrane as a helical span at residues 153 to 173; sequence AIMGVAFTWVMALACAAPPLV. Over 174–202 the chain is Extracellular; that stretch reads GWSRYIPQGMQCSCGALYFTLKPEINNES. A Zn(2+)-binding site is contributed by glutamate 201. The chain crosses the membrane as a helical span at residues 203-224; it reads FVIYMFVVHFSIPLIVIFFCYG. Residues 225–252 lie on the Cytoplasmic side of the membrane; the sequence is QLVFTVKEAAAQQQESATTQKAEKEVTR. The chain crosses the membrane as a helical span at residues 253-274; it reads MVIIMVIAFLICWLPYAGVAFY. Residues 275–286 lie on the Extracellular side of the membrane; it reads IFTHQGSDFGPI. Residue glutamine 279 coordinates Zn(2+). The chain crosses the membrane as a helical span at residues 287–308; sequence FMTIPAFFAKSSSVYNPVIYIM. Lysine 296 is subject to N6-(retinylidene)lysine. The Cytoplasmic portion of the chain corresponds to 309-348; the sequence is MNKQFRNCMLTTLCCGKNPLGDDEASTTVSKTETSQVAPA. 2 S-palmitoyl cysteine lipidation sites follow: cysteine 322 and cysteine 323. Residues 330 to 348 form an interaction with SAG region; that stretch reads DDEASTTVSKTETSQVAPA. Serine 334 bears the Phosphoserine mark. The residue at position 334 (serine 334) is a Phosphoserine; by RK and GRK7. Phosphothreonine occurs at positions 335 and 336. A phosphothreonine; by RK and GRK7 mark is found at threonine 335 and threonine 336. The residue at position 338 (serine 338) is a Phosphoserine; by RK and GRK7. 2 positions are modified to phosphothreonine: threonine 340 and threonine 342. Serine 343 is subject to Phosphoserine; by RK and GRK7.

The protein belongs to the G-protein coupled receptor 1 family. Opsin subfamily. In terms of assembly, homodimer. May form a complex composed of RHO, GRK1 and RCVRN in a Ca(2+)-dependent manner; RCVRN prevents the interaction between GRK1 and RHO. Interacts with GRK1. Interacts (phosphorylated form) with SAG. Interacts with GNAT1. Interacts with GNAT3. SAG and G-proteins compete for a common binding site. Interacts with PRCD; the interaction promotes PRCD stability. Forms a complex with ASAP1 and ARF4. Forms a complex with ASAP1, RAB11A, Rabin8/RAB3IP, ARF4 and RAB11FIP3; the complex regulates Golgi-to-cilia rhodopsin/RHO transport in photoreceptors. Post-translationally, phosphorylated on some or all of the serine and threonine residues present in the C-terminal region. Contains one covalently linked retinal chromophore. Upon light absorption, the covalently bound 11-cis-retinal is converted to all-trans-retinal. After hydrolysis of the Schiff base and release of the covalently bound all-trans-retinal, active rhodopsin is regenerated by binding of a fresh molecule of 11-cis-retinal.

It localises to the membrane. The protein localises to the cell projection. The protein resides in the cilium. Its subcellular location is the photoreceptor outer segment. Photoreceptor required for image-forming vision at low light intensity. Required for photoreceptor cell viability after birth. Light-induced isomerization of 11-cis to all-trans retinal triggers a conformational change that activates signaling via G-proteins. Subsequent receptor phosphorylation mediates displacement of the bound G-protein alpha subunit by the arrestin SAG and terminates signaling. This is Rhodopsin (RHO) from Ovis aries (Sheep).